Here is a 282-residue protein sequence, read N- to C-terminus: 4-hydroxybenzoate octaprenyltransferase (282 aa).

9 helical membrane-spanning segments follow: residues 17-37 (IGILLLWYPTAWALWMANQGF), 40-60 (IDLLMIFLLGTVFMRSAGCVI), 90-110 (AFILLFILLCASLLLLLKLPI), 113-133 (FYFAVISVLITFLYPFCKRFL), 135-155 (APQLILGLAFSMGIPMAFIAS), 163-183 (FIVLFLINFSWIIAYDTMYAM), 207-227 (LIIALLLIFLHSLWLVWAINK), 231-251 (WFFYLLWCTAAGILTYQLKLI), and 262-282 (AFLVSGYYGLVMWFAVGLALI).

Belongs to the UbiA prenyltransferase family. It depends on Mg(2+) as a cofactor.

Its subcellular location is the cell inner membrane. It carries out the reaction all-trans-octaprenyl diphosphate + 4-hydroxybenzoate = 4-hydroxy-3-(all-trans-octaprenyl)benzoate + diphosphate. It functions in the pathway cofactor biosynthesis; ubiquinone biosynthesis. Functionally, catalyzes the prenylation of para-hydroxybenzoate (PHB) with an all-trans polyprenyl group. Mediates the second step in the final reaction sequence of ubiquinone-8 (UQ-8) biosynthesis, which is the condensation of the polyisoprenoid side chain with PHB, generating the first membrane-bound Q intermediate 3-octaprenyl-4-hydroxybenzoate. This is 4-hydroxybenzoate octaprenyltransferase from Legionella pneumophila subsp. pneumophila (strain Philadelphia 1 / ATCC 33152 / DSM 7513).